Consider the following 170-residue polypeptide: MNLKDYIATIPNYPKEGIEFRDISPLMADGNAYSYAVREIVQYATDKQIDMIVGPEARGFIVGCPVAFELGIGFAPVRKPGKLPREVISADYEKEYGVDTLTMHADAIKPGQRVLIVDDLLATGGTVKATIEMIEKLGGIVAGCAFLIELDDLKGREAIGDYDYKVLMHY.

Belongs to the purine/pyrimidine phosphoribosyltransferase family. Homodimer.

Its subcellular location is the cytoplasm. It carries out the reaction AMP + diphosphate = 5-phospho-alpha-D-ribose 1-diphosphate + adenine. Its pathway is purine metabolism; AMP biosynthesis via salvage pathway; AMP from adenine: step 1/1. Its function is as follows. Catalyzes a salvage reaction resulting in the formation of AMP, that is energically less costly than de novo synthesis. This chain is Adenine phosphoribosyltransferase, found in Streptococcus suis (strain 98HAH33).